The chain runs to 251 residues: Aquaporin (251 aa).

Residues 1–11 (MAGETLRKIQS) lie on the Cytoplasmic side of the membrane. The helical transmembrane segment at 12–32 (LLGEMVASFIFGFAVYSAILG) threads the bilayer. Topologically, residues 33–42 (STIAQQPAAK) are extracellular. Residues 43 to 63 (VIIGLTVGFSAIGIIYSFSDV) traverse the membrane as a helical segment. The Cytoplasmic segment spans residues 64-86 (TIAHFNPAITLAAILTGKMGILC). The NPA motif lies at 69–71 (NPA). The helical transmembrane segment at 87–107 (GLGYMLAQCVGFILAVCALLV) threads the bilayer. The Extracellular portion of the chain corresponds to 108–133 (CSPVGYKETLNVIRPAPAPFGADNLN). A helical membrane pass occupies residues 134–154 (VFFTEFFLTAILVHIAFAVAV). Residues 155–179 (NPYRPKVDTDGKFVDPDEKEPVDRR) lie on the Cytoplasmic side of the membrane. The helical transmembrane segment at 180–200 (ITAPLCIGLTLGFLAFMGLVT) threads the bilayer. At 201-224 (SGGAFNPGLTLAPVIMSNTWQHFW) the chain is on the extracellular side. The short motif at 206–208 (NPG) is the NPG element. A helical membrane pass occupies residues 225–245 (LYLGAQYLGGLVGGLLQVFVL). At 246–251 (YKLSSN) the chain is on the cytoplasmic side.

Belongs to the MIP/aquaporin (TC 1.A.8) family.

It is found in the cell membrane. Functionally, water channel required to facilitate the transport of water across membranes. Involved in osmotolerance. The polypeptide is Aquaporin (AQP) (Encephalitozoon hellem (Microsporidian parasite)).